We begin with the raw amino-acid sequence, 750 residues long: Photosystem I P700 chlorophyll a apoprotein A1 (750 aa).

Transmembrane regions (helical) follow at residues 70–93 (VFSAHFGQLAIIFIWLSGMYFHGA), 156–179 (LYSTAIGGLVFAALMLFAGWFHYH), 195–219 (LNHHLAGLLGLGSLSWAGHQVHVSL), 291–309 (TAHHHLAIAVLFLVAGHMY), 346–369 (WHAQLALNLAMLGSLTIIVAHHMY), 385–411 (LSLFTHHMWIGGFLIVGAAAHAAIFMV), 433–455 (AIISHLNWVCIFLGFHSFGLYIH), and 531–549 (FLVHHIHAFTIHVTVLILL). Positions 573 and 582 each coordinate [4Fe-4S] cluster. 2 consecutive transmembrane segments (helical) span residues 589–610 (HVFLGLFWMYNSISVVIFHFSW) and 664–686 (LSAYGLLFLGAHFVWAFSLMFLF). Histidine 675 is a binding site for chlorophyll a'. Chlorophyll a contacts are provided by methionine 683 and tyrosine 691. Tryptophan 692 is a phylloquinone binding site. Residues 724 to 744 (AVGVAHYLLGGIATTWAFFLA) form a helical membrane-spanning segment.

Belongs to the PsaA/PsaB family. In terms of assembly, the PsaA/B heterodimer binds the P700 chlorophyll special pair and subsequent electron acceptors. PSI consists of a core antenna complex that captures photons, and an electron transfer chain that converts photonic excitation into a charge separation. The eukaryotic PSI reaction center is composed of at least 11 subunits. P700 is a chlorophyll a/chlorophyll a' dimer, A0 is one or more chlorophyll a, A1 is one or both phylloquinones and FX is a shared 4Fe-4S iron-sulfur center. is required as a cofactor.

The protein resides in the plastid. The protein localises to the chloroplast thylakoid membrane. It carries out the reaction reduced [plastocyanin] + hnu + oxidized [2Fe-2S]-[ferredoxin] = oxidized [plastocyanin] + reduced [2Fe-2S]-[ferredoxin]. PsaA and PsaB bind P700, the primary electron donor of photosystem I (PSI), as well as the electron acceptors A0, A1 and FX. PSI is a plastocyanin-ferredoxin oxidoreductase, converting photonic excitation into a charge separation, which transfers an electron from the donor P700 chlorophyll pair to the spectroscopically characterized acceptors A0, A1, FX, FA and FB in turn. Oxidized P700 is reduced on the lumenal side of the thylakoid membrane by plastocyanin. This is Photosystem I P700 chlorophyll a apoprotein A1 from Marchantia polymorpha (Common liverwort).